We begin with the raw amino-acid sequence, 1218 residues long: MEADGAGEQMRPLLTRGPDEEAVVDLGKTSSTVNTKFEKEELESHRAVYVGVHVPFSKESRRRHRHRGHKHHHRRRKDKDSDKEDGRESPSYDTPSQRVQFILGTEDDDEEHIPHDLFTEMDELCYRDGEEYEWKETARWLKFEEDVEDGGDRWSKPYVATLSLHSLFELRSCILNGTVMLDMRASTLDEIADMVLDNMIASGQLDDSIRENVREALLKRHHHQNEKRFTSRIPLVRSFADIGKKHSDPHLLERNGEGLSASRHSLRTGLSASNLSLRGESPLSLLLSHLLPSSRAGTPAGSRCTTPVPTPQNSPPSSPSLSRLTSRSSQQTQPQAPEVLVSPDRDDIPRVVIHPPEEDIEALKGQEQKNEENTDFTPGILASPQSAPGNLDSSKSGEVKGNGSGGSRENSTVDFSKVDMNFMRKIPTGAEASNVLVGEVDFLERPIIAFVRLAPAVLLSGLTEVPVPTRFLFLLLGPAGKAPQYHEIGRSIATLMTDEIFHDVAYKAKDRNDLLSGIDEFLDQVTVLPPGEWDPSIRIEPPKSVPSQEKRKIPAFPNGSAPVSADPPKEADHHAGPELQRTGRLFGGLILDIKRKAPFFLSDFKDALSLQCLASILFLYCACMSPVITFGGLLGEATEGRISAIESLFGASLTGIAYSLFAGQPLTILGSTGPVLVFEKILFKFCRDYHLSYLSLRTSIGLWTSFLCIVLVATDASSLVCYITRFTEEAFAALICIIFIYEALEKLFHLGEIYAFNMHNNLDALTSYTCVCAEPSNPSNETVELWERKNVTAASISWANLTVSECKTFHGMFVGSACGPHGPYVPDVLFWCVVLFFTTFFLSSFLKQFKTKRYFPTKVRSTISDFAVFLTIVIMVAIDYLVGIPSPKLHVPEKFEPTDPSRGWIISPLGDNPWWTLLIAAVPALLCTILIFMDQQITAVIINRKEHKLKKGAGYHLDLLMVAVMLGVCSIMGLPWFVAATVLSISHVNSLKVESECSAPGEQPKFLGIREQRVTGLMIFILMGLSVFMTSVLKFIPMPVLYGVFLYMGVSSLKGIQFFDRIKLFGMPAKHQPDLIYLRYVPLWKVHVFTVVQLTCLVLLWVIKASAAAVVFPMMVLALVFVRKLMDLCFTKRELSWLDDLMPESKKKKEDDKKKKEKEEAERMLQGDGDTVHLPFERGSLLQIPVKTLKYSPEKPVSVTINFEDEPSKKYMDAETSL.

Disordered stretches follow at residues 1-31 and 53-99; these read MEADGAGEQMRPLLTRGPDEEAVVDLGKTSS and HVPF…SQRV. The Extracellular segment spans residues 1 to 612; the sequence is MEADGAGEQM…DFKDALSLQC (612 aa). Serine 57, serine 60, serine 89, and serine 155 each carry phosphoserine. Basic residues predominate over residues 60-77; it reads SRRRHRHRGHKHHHRRRK. Over residues 78-90 the composition is skewed to basic and acidic residues; it reads DKDSDKEDGRESP. Asparagine 176 carries an N-linked (GlcNAc...) asparagine glycan. 3 positions are modified to phosphoserine: serine 238, serine 247, and arginine 263. Asparagine 274 carries N-linked (GlcNAc...) asparagine glycosylation. Disordered regions lie at residues 294–350, 364–412, and 536–577; these read SRAG…DIPR, KGQE…ENST, and SIRI…HAGP. A compositionally biased stretch (pro residues) spans 308–318; it reads VPTPQNSPPSS. A compositionally biased stretch (low complexity) spans 319–337; that stretch reads PSLSRLTSRSSQQTQPQAP. Residues 383–396 show a composition bias toward polar residues; it reads SPQSAPGNLDSSKS. Phosphoserine is present on residues serine 386, serine 404, and serine 407. Residue asparagine 410 is glycosylated (N-linked (GlcNAc...) asparagine). Residues serine 411 and serine 560 each carry the phosphoserine modification. Positions 567-576 are enriched in basic and acidic residues; the sequence is PPKEADHHAG. The helical transmembrane segment at 613-633 threads the bilayer; it reads LASILFLYCACMSPVITFGGL. The Cytoplasmic portion of the chain corresponds to 634 to 641; that stretch reads LGEATEGR. The chain crosses the membrane as a helical span at residues 642–662; the sequence is ISAIESLFGASLTGIAYSLFA. At 663–699 the chain is on the extracellular side; that stretch reads GQPLTILGSTGPVLVFEKILFKFCRDYHLSYLSLRTS. The chain crosses the membrane as a helical span at residues 700–720; sequence IGLWTSFLCIVLVATDASSLV. The Cytoplasmic portion of the chain corresponds to 721 to 729; it reads CYITRFTEE. The chain crosses the membrane as a helical span at residues 730 to 750; that stretch reads AFAALICIIFIYEALEKLFHL. At 751–821 the chain is on the extracellular side; the sequence is GEIYAFNMHN…MFVGSACGPH (71 aa). Residues cysteine 770 and cysteine 772 are joined by a disulfide bond. Asparagine 780, asparagine 790, and asparagine 800 each carry an N-linked (GlcNAc...) asparagine glycan. Cysteines 806 and 818 form a disulfide. A helical transmembrane segment spans residues 822 to 842; the sequence is GPYVPDVLFWCVVLFFTTFFL. Topologically, residues 843–865 are cytoplasmic; that stretch reads SSFLKQFKTKRYFPTKVRSTISD. Residues 866–886 traverse the membrane as a helical segment; that stretch reads FAVFLTIVIMVAIDYLVGIPS. The Extracellular portion of the chain corresponds to 887 to 912; that stretch reads PKLHVPEKFEPTDPSRGWIISPLGDN. The chain crosses the membrane as a helical span at residues 913–933; that stretch reads PWWTLLIAAVPALLCTILIFM. At 934–958 the chain is on the cytoplasmic side; that stretch reads DQQITAVIINRKEHKLKKGAGYHLD. A helical transmembrane segment spans residues 959-979; sequence LLMVAVMLGVCSIMGLPWFVA. Topologically, residues 980–1015 are extracellular; the sequence is ATVLSISHVNSLKVESECSAPGEQPKFLGIREQRVT. An essential for cell membrane localization and transport activity region spans residues 1012-1135; that stretch reads QRVTGLMIFI…MDLCFTKREL (124 aa). Residues 1016 to 1036 form a helical membrane-spanning segment; it reads GLMIFILMGLSVFMTSVLKFI. The Cytoplasmic portion of the chain corresponds to 1037–1038; it reads PM. Residues 1039–1059 form a helical membrane-spanning segment; it reads PVLYGVFLYMGVSSLKGIQFF. Topologically, residues 1060–1096 are extracellular; sequence DRIKLFGMPAKHQPDLIYLRYVPLWKVHVFTVVQLTC. 2 positions are modified to phosphoserine: methionine 1067 and leucine 1078. The chain crosses the membrane as a helical span at residues 1097–1117; the sequence is LVLLWVIKASAAAVVFPMMVL. The interval 1118-1140 is essential for interaction with RACK1; that stretch reads ALVFVRKLMDLCFTKRELSWLDD. The Cytoplasmic portion of the chain corresponds to 1118 to 1218; it reads ALVFVRKLMD…KKYMDAETSL (101 aa). The tract at residues 1138-1140 is CA2-binding; that stretch reads LDD. Basic and acidic residues predominate over residues 1148–1165; it reads KKEDDKKKKEKEEAERML. The tract at residues 1148 to 1172 is disordered; sequence KKEDDKKKKEKEEAERMLQGDGDTV. Phosphothreonine is present on threonine 1171. Phosphoserine occurs at positions 1180, 1188, 1201, and 1217. The short motif at 1215–1218 is the PDZ-binding element; it reads ETSL.

This sequence belongs to the anion exchanger (TC 2.A.31) family. As to quaternary structure, interacts with USH1C. Forms a complex with ATP6V1B1 and NHERF1/EBP50. Interacts in a pH dependent-manner with CA2/carbonic anhydrase 2. Interacts with CFTR probably through NHERF1/EBP50. In terms of assembly, interacts with RACK1. In terms of processing, undergoes lysosome-mediated degradation. Post-translationally, N-glycosylated. As to expression, expressed in aorta, ventricles, atrium, mesenteric artery, kidney, spleen, duodenum, jejunum, ileum, colon, lung, trachea, gastric fundus and pylorus, cerebrum, cerebellum, pancreas, liver, parotid gland, and epididymis. Expressed in the inner ear by cochlear outer and inner hair cells (at protein level). Highly expressed in testis and spleen. In terms of tissue distribution, specifically expressed in kidney. Specifically expressed in hippocampal neurons.

The protein localises to the basolateral cell membrane. It localises to the apical cell membrane. It is found in the cell projection. The protein resides in the stereocilium. Its subcellular location is the cell membrane. The catalysed reaction is hydrogencarbonate(in) + Na(+)(in) = hydrogencarbonate(out) + Na(+)(out). Its activity is regulated as follows. Insensitive to stilbene derivatives. In terms of biological role, electroneutral sodium- and bicarbonate-dependent cotransporter with a Na(+):HCO3(-) 1:1 stoichiometry. Mediates the sodium-dependent bicarbonate transport important for pH recovery after acid load as well as for regulation of steady-state pH in the duodenum and vascular smooth muscle cells. Plays a key role in macrophage acidification, mediating bicarbonate import into the cytoplasm which is crucial for net acid extrusion and maintenance of cytoplasmic pH during phagocytosis. Provides cellular bicarbonate for de novo purine and pyrimidine synthesis and is a key mediator of de novo nucleotide synthesis downstream of mTORC1 signaling in proliferating cells. The protein is Sodium bicarbonate cotransporter 3 (Slc4a7) of Rattus norvegicus (Rat).